Consider the following 232-residue polypeptide: Probable transcriptional regulatory protein Bd1964 (232 aa).

This sequence belongs to the TACO1 family.

The protein localises to the cytoplasm. The protein is Probable transcriptional regulatory protein Bd1964 of Bdellovibrio bacteriovorus (strain ATCC 15356 / DSM 50701 / NCIMB 9529 / HD100).